Consider the following 239-residue polypeptide: dITP/XTP pyrophosphatase (239 aa).

Position 7 to 12 (7 to 12 (THNEGK)) interacts with substrate. The active-site Proton acceptor is the Asp74. Asp74 is a binding site for Mg(2+). Residues Ser75, 182 to 185 (FGYD), Lys214, and 219 to 220 (HR) each bind substrate.

Belongs to the HAM1 NTPase family. Homodimer. Requires Mg(2+) as cofactor.

It catalyses the reaction XTP + H2O = XMP + diphosphate + H(+). The catalysed reaction is dITP + H2O = dIMP + diphosphate + H(+). The enzyme catalyses ITP + H2O = IMP + diphosphate + H(+). Pyrophosphatase that catalyzes the hydrolysis of nucleoside triphosphates to their monophosphate derivatives, with a high preference for the non-canonical purine nucleotides XTP (xanthosine triphosphate), dITP (deoxyinosine triphosphate) and ITP. Seems to function as a house-cleaning enzyme that removes non-canonical purine nucleotides from the nucleotide pool, thus preventing their incorporation into DNA/RNA and avoiding chromosomal lesions. This Bifidobacterium animalis subsp. lactis (strain AD011) protein is dITP/XTP pyrophosphatase.